The following is a 404-amino-acid chain: MSQSRYFFTSESVSEGHPDKVSDQISDAVLDEFLRQDPNSRVACETFVTTGQVIVGGEVTTKGIVDIQKIARRVVTEIGYTKGEYMFEANSCGVLSALHSQSPDINRGVDRKEEIADEFDRVGAGDQGMMFGYACTETPELMPAAIQFAQQLVKKLAEIRKEGKIMTYLRPDAKSQVTLEYIDDKVARVDAVVVSTQHDPEPAGMSEADFQAVIRKDIIENVVKVVIPAELLDENTKFHINPTGRFEIGGPHGDTGLTGRKIIVDTYGGAAPHGGGAFSGKDPSKVDRSAAYASRHVAKNIVAADLADKCTVQVSYAIGVARPVSIYIDTHGTAKHGLDDAEIQAKAEKIFDLRPAAIIRRFNLDRPHGWCYQDTAAYGHFGRDIFPWEKTDKVEELKKAFNLA.

Residues 1–13 are compositionally biased toward polar residues; the sequence is MSQSRYFFTSESV. The disordered stretch occupies residues 1–20; the sequence is MSQSRYFFTSESVSEGHPDK. His17 provides a ligand contact to ATP. Mg(2+) is bound at residue Asp19. Glu45 is a binding site for K(+). Glu58 and Gln101 together coordinate L-methionine. Residues 101-111 form a flexible loop region; that stretch reads QSPDINRGVDR. ATP contacts are provided by residues 172–174, 245–246, Asp254, 260–261, Ala277, and Lys281; these read DAK, RF, and RK. L-methionine is bound at residue Asp254. Lys285 contacts L-methionine.

The protein belongs to the AdoMet synthase family. As to quaternary structure, homotetramer; dimer of dimers. Mg(2+) is required as a cofactor. It depends on K(+) as a cofactor.

Its subcellular location is the cytoplasm. The catalysed reaction is L-methionine + ATP + H2O = S-adenosyl-L-methionine + phosphate + diphosphate. It functions in the pathway amino-acid biosynthesis; S-adenosyl-L-methionine biosynthesis; S-adenosyl-L-methionine from L-methionine: step 1/1. Its function is as follows. Catalyzes the formation of S-adenosylmethionine (AdoMet) from methionine and ATP. The overall synthetic reaction is composed of two sequential steps, AdoMet formation and the subsequent tripolyphosphate hydrolysis which occurs prior to release of AdoMet from the enzyme. This Chlorobium limicola (strain DSM 245 / NBRC 103803 / 6330) protein is S-adenosylmethionine synthase.